The following is a 257-amino-acid chain: Small ribosomal subunit protein uS15m (257 aa).

A mitochondrion-targeting transit peptide spans 1 to 57; sequence MLRAAWRALSSVRVQAVTQAPVPALRARSSASLPSARCGLQTPSLLNAARAYAVQKP. A disordered region spans residues 228 to 257; sequence KAAAAAAKKEKRERVPENPSNALPEKTKEN. A compositionally biased stretch (basic and acidic residues) spans 234–243; that stretch reads AKKEKRERVP.

Belongs to the universal ribosomal protein uS15 family. In terms of assembly, component of the mitochondrial ribosome small subunit (28S) which comprises a 12S rRNA and about 30 distinct proteins. Interacts with METTL17.

The protein localises to the mitochondrion matrix. The sequence is that of Small ribosomal subunit protein uS15m (Mrps15) from Rattus norvegicus (Rat).